The following is a 172-amino-acid chain: Adenine phosphoribosyltransferase (172 aa).

This sequence belongs to the purine/pyrimidine phosphoribosyltransferase family. As to quaternary structure, homodimer.

Its subcellular location is the cytoplasm. The catalysed reaction is AMP + diphosphate = 5-phospho-alpha-D-ribose 1-diphosphate + adenine. The protein operates within purine metabolism; AMP biosynthesis via salvage pathway; AMP from adenine: step 1/1. Functionally, catalyzes a salvage reaction resulting in the formation of AMP, that is energically less costly than de novo synthesis. This chain is Adenine phosphoribosyltransferase, found in Prochlorococcus marinus (strain SARG / CCMP1375 / SS120).